Reading from the N-terminus, the 348-residue chain is Eukaryotic translation initiation factor 3 subunit H (348 aa).

Residues 35–169 (VQIDGLVVLK…LKAYRLTPKL (135 aa)) form the MPN domain. Positions 267–285 (QQQKHQYQQRRQQENIQRQ) are enriched in low complexity. Residues 267 to 311 (QQQKHQYQQRRQQENIQRQSRGEPPLPEEDINKLFKPPQPPPRME) are disordered.

The protein belongs to the eIF-3 subunit H family. Component of the eukaryotic translation initiation factor 3 (eIF-3) complex, which is composed of 13 subunits: EIF3A, EIF3B, EIF3C, EIF3D, EIF3E, EIF3F, EIF3G, EIF3H, EIF3I, EIF3J, EIF3K, EIF3L and EIF3M.

The protein resides in the cytoplasm. Functionally, component of the eukaryotic translation initiation factor 3 (eIF-3) complex, which is involved in protein synthesis of a specialized repertoire of mRNAs and, together with other initiation factors, stimulates binding of mRNA and methionyl-tRNAi to the 40S ribosome. The eIF-3 complex specifically targets and initiates translation of a subset of mRNAs involved in cell proliferation. The chain is Eukaryotic translation initiation factor 3 subunit H from Taeniopygia guttata (Zebra finch).